The following is a 155-amino-acid chain: DNA gyrase inhibitor (155 aa).

The protein belongs to the DNA gyrase inhibitor family. In terms of assembly, interacts with DNA gyrase.

It localises to the cytoplasm. In terms of biological role, inhibits the supercoiling activity of DNA gyrase. Acts by inhibiting DNA gyrase at an early step, prior to (or at the step of) binding of DNA by the gyrase. It protects cells against toxins that target DNA gyrase, by inhibiting activity of these toxins and reducing the formation of lethal double-strand breaks in the cell. This chain is DNA gyrase inhibitor, found in Salmonella arizonae (strain ATCC BAA-731 / CDC346-86 / RSK2980).